A 733-amino-acid chain; its full sequence is uncharacterized protein (733 aa).

A helical transmembrane segment spans residues 174–194 (WAVMILASLRPELFGPIIIAG).

It localises to the membrane. This is an uncharacterized protein from Rhizobium meliloti (Ensifer meliloti).